The chain runs to 138 residues: Cysteine desulfuration protein SufE (138 aa).

The Cysteine persulfide intermediate role is filled by Cys51.

It belongs to the SufE family. As to quaternary structure, homodimer. Interacts with SufS.

The protein localises to the cytoplasm. The protein operates within cofactor biosynthesis; iron-sulfur cluster biosynthesis. Participates in cysteine desulfuration mediated by SufS. Cysteine desulfuration mobilizes sulfur from L-cysteine to yield L-alanine and constitutes an essential step in sulfur metabolism for biosynthesis of a variety of sulfur-containing biomolecules. Functions as a sulfur acceptor for SufS, by mediating the direct transfer of the sulfur atom from the S-sulfanylcysteine of SufS, an intermediate product of cysteine desulfuration process. This chain is Cysteine desulfuration protein SufE, found in Pectobacterium atrosepticum (strain SCRI 1043 / ATCC BAA-672) (Erwinia carotovora subsp. atroseptica).